The following is a 125-amino-acid chain: Protein ApaG (125 aa).

The region spanning 1-125 (MINSPRVCIQ…FRLAVPTLIH (125 aa)) is the ApaG domain.

The protein is Protein ApaG of Citrobacter koseri (strain ATCC BAA-895 / CDC 4225-83 / SGSC4696).